Consider the following 85-residue polypeptide: MSKDCKMVSELCEKVSKIMTVVKELRAEHRREFVQKPEEIEMDVFWRQTFVRFTEPAEKWSNIRHRPAPATTPIDIVYPLREQDW.

This is an uncharacterized protein from Caenorhabditis elegans.